A 125-amino-acid polypeptide reads, in one-letter code: Large ribosomal subunit protein bL12 (125 aa).

It belongs to the bacterial ribosomal protein bL12 family. In terms of assembly, homodimer. Part of the ribosomal stalk of the 50S ribosomal subunit. Forms a multimeric L10(L12)X complex, where L10 forms an elongated spine to which 2 to 4 L12 dimers bind in a sequential fashion. Binds GTP-bound translation factors.

Forms part of the ribosomal stalk which helps the ribosome interact with GTP-bound translation factors. Is thus essential for accurate translation. This chain is Large ribosomal subunit protein bL12, found in Rickettsia conorii (strain ATCC VR-613 / Malish 7).